A 186-amino-acid chain; its full sequence is UPF0200 protein PH1008 (186 aa).

7-14 is a binding site for ATP; sequence GMPGSGKG.

This sequence belongs to the UPF0200 family.

The chain is UPF0200 protein PH1008 from Pyrococcus horikoshii (strain ATCC 700860 / DSM 12428 / JCM 9974 / NBRC 100139 / OT-3).